Reading from the N-terminus, the 242-residue chain is Small ribosomal subunit protein uS2 (242 aa).

This sequence belongs to the universal ribosomal protein uS2 family.

The sequence is that of Small ribosomal subunit protein uS2 from Neisseria gonorrhoeae (strain ATCC 700825 / FA 1090).